We begin with the raw amino-acid sequence, 196 residues long: Probable malonic semialdehyde reductase RutE (196 aa).

This sequence belongs to the nitroreductase family. HadB/RutE subfamily. The cofactor is FMN.

It catalyses the reaction 3-hydroxypropanoate + NADP(+) = 3-oxopropanoate + NADPH + H(+). In terms of biological role, may reduce toxic product malonic semialdehyde to 3-hydroxypropionic acid, which is excreted. The polypeptide is Probable malonic semialdehyde reductase RutE (Shigella sonnei (strain Ss046)).